A 110-amino-acid polypeptide reads, in one-letter code: UPF0122 protein spr1167 (110 aa).

This sequence belongs to the UPF0122 family.

Functionally, might take part in the signal recognition particle (SRP) pathway. This is inferred from the conservation of its genetic proximity to ftsY/ffh. May be a regulatory protein. In Streptococcus pneumoniae (strain ATCC BAA-255 / R6), this protein is UPF0122 protein spr1167.